The chain runs to 242 residues: Adenosine 5'-phosphosulfate reductase (242 aa).

The [4Fe-4S] cluster site is built by C125, C126, C208, and C211. Catalysis depends on C234, which acts as the Nucleophile; cysteine thiosulfonate intermediate.

It belongs to the PAPS reductase family. CysH subfamily. [4Fe-4S] cluster is required as a cofactor.

The protein localises to the cytoplasm. It catalyses the reaction [thioredoxin]-disulfide + sulfite + AMP + 2 H(+) = adenosine 5'-phosphosulfate + [thioredoxin]-dithiol. It participates in sulfur metabolism; hydrogen sulfide biosynthesis; sulfite from sulfate. In terms of biological role, catalyzes the formation of sulfite from adenosine 5'-phosphosulfate (APS) using thioredoxin as an electron donor. This chain is Adenosine 5'-phosphosulfate reductase, found in Staphylococcus saprophyticus subsp. saprophyticus (strain ATCC 15305 / DSM 20229 / NCIMB 8711 / NCTC 7292 / S-41).